A 540-amino-acid polypeptide reads, in one-letter code: Acrosin-binding protein (540 aa).

Positions 1-24 (MKLAASFLLMLLEVLLLPETPLSA) are cleaved as a signal peptide. A pro-ACR binding region spans residues 25–104 (EEALASTPGS…ASWFESFCQF (80 aa)). A propeptide spans 25 to 272 (EEALASTPGS…NPSFFTPRVR (248 aa)) (removed in mature form). The disordered stretch occupies residues 181–266 (SLSLGGKEQQ…SKSLSSNPSF (86 aa)). Residues 195-213 (LGLEQQHKQEQIQEHKLEE) show a composition bias toward basic and acidic residues. The span at 214 to 241 (AQEQEEQEEEEEEEEAKQEEGQGTEEGL) shows a compositional bias: acidic residues. Residues 256 to 266 (QSKSLSSNPSF) are compositionally biased toward polar residues. Positions 316 to 424 (LPHTETLMVL…NQAKIPEKGR (109 aa)) are pro-ACR binding.

Binds pro-ACR. Does not bind the mature form of ACR. In terms of assembly, binds pro-ACR. Does not bind mature form of ACR. In terms of processing, the N-terminus is blocked. Phosphorylated on Tyr residues in capacitated sperm. Post-translationally, synthesized as a 60-kDa precursor, the 32-kDa mature form is post-translationally produced by the removal of the N-terminal half of the precursor during sperm maturation in the testis and/or epididymis.

Its subcellular location is the cytoplasmic vesicle. It is found in the secretory vesicle. It localises to the acrosome. Acrosomal protein that maintains proacrosin (pro-ACR) as an enzymatically inactive zymogen in the acrosome. Involved also in the acrosome formation. Its function is as follows. Maintains pro-ACR as an enzymatically inactive zymogen in the acrosome until acrosomal exocytosis. Partially also contributes to the assembly of acrosomal proteins to form an acrosomal granule. In terms of biological role, rodent specific isoform that participates in the formation of the acrosomal granule into the center of the acrosomal vesicle during early spermiogenesis. In the fertilization process promotes ACR release from the acrosome during acrosomal exocytosis. This is Acrosin-binding protein from Rattus norvegicus (Rat).